The sequence spans 106 residues: uncharacterized protein (106 aa).

The Cytoplasmic portion of the chain corresponds to Met1 to Pro6. A helical transmembrane segment spans residues Leu7–Pro27. The Extracellular portion of the chain corresponds to Tyr28–Ser32. The chain crosses the membrane as a helical span at residues Leu33–Ser53. Over Gln54–Lys73 the chain is Cytoplasmic. Residues Phe74–Phe94 traverse the membrane as a helical segment. At Tyr95 to Lys106 the chain is on the extracellular side.

The protein localises to the membrane. This is an uncharacterized protein from Saccharomyces cerevisiae (strain ATCC 204508 / S288c) (Baker's yeast).